We begin with the raw amino-acid sequence, 209 residues long: Large ribosomal subunit protein uL3 (209 aa).

Residues 118 to 150 (GFQGAIKRHGQSRGPMTHGSRYHRRPGSMGPVD) are disordered.

Belongs to the universal ribosomal protein uL3 family. As to quaternary structure, part of the 50S ribosomal subunit. Forms a cluster with proteins L14 and L19.

Functionally, one of the primary rRNA binding proteins, it binds directly near the 3'-end of the 23S rRNA, where it nucleates assembly of the 50S subunit. The protein is Large ribosomal subunit protein uL3 of Bacillus pumilus (strain SAFR-032).